A 248-amino-acid chain; its full sequence is Segregation and condensation protein A (248 aa).

The protein belongs to the ScpA family. As to quaternary structure, component of a cohesin-like complex composed of ScpA, ScpB and the Smc homodimer, in which ScpA and ScpB bind to the head domain of Smc. The presence of the three proteins is required for the association of the complex with DNA.

It localises to the cytoplasm. Functionally, participates in chromosomal partition during cell division. May act via the formation of a condensin-like complex containing Smc and ScpB that pull DNA away from mid-cell into both cell halves. The polypeptide is Segregation and condensation protein A (Clostridium perfringens (strain ATCC 13124 / DSM 756 / JCM 1290 / NCIMB 6125 / NCTC 8237 / Type A)).